Consider the following 430-residue polypeptide: Enolase (430 aa).

Residue Gln-163 participates in (2R)-2-phosphoglycerate binding. The Proton donor role is filled by Glu-205. Positions 242, 285, and 312 each coordinate Mg(2+). The (2R)-2-phosphoglycerate site is built by Lys-337, Arg-366, Ser-367, and Lys-388. The active-site Proton acceptor is the Lys-337.

The protein belongs to the enolase family. The cofactor is Mg(2+).

It is found in the cytoplasm. Its subcellular location is the secreted. The protein resides in the cell surface. It catalyses the reaction (2R)-2-phosphoglycerate = phosphoenolpyruvate + H2O. The protein operates within carbohydrate degradation; glycolysis; pyruvate from D-glyceraldehyde 3-phosphate: step 4/5. In terms of biological role, catalyzes the reversible conversion of 2-phosphoglycerate (2-PG) into phosphoenolpyruvate (PEP). It is essential for the degradation of carbohydrates via glycolysis. This is Enolase from Rubrobacter xylanophilus (strain DSM 9941 / JCM 11954 / NBRC 16129 / PRD-1).